The primary structure comprises 318 residues: L-lactate dehydrogenase (318 aa).

NAD(+)-binding positions include V18, D39, K44, Y69, and 83–84; that span reads GA. Substrate is bound by residues Q86 and R92. NAD(+)-binding positions include S105, 122–124, and S147; that span reads VSN. 124 to 127 contacts substrate; the sequence is NPVD. 152-155 provides a ligand contact to substrate; the sequence is DTSR. H179 serves as the catalytic Proton acceptor. Phosphotyrosine is present on Y225. Residue T234 participates in substrate binding.

This sequence belongs to the LDH/MDH superfamily. LDH family. As to quaternary structure, homotetramer.

The protein resides in the cytoplasm. The enzyme catalyses (S)-lactate + NAD(+) = pyruvate + NADH + H(+). It functions in the pathway fermentation; pyruvate fermentation to lactate; (S)-lactate from pyruvate: step 1/1. Its function is as follows. Catalyzes the conversion of lactate to pyruvate. The chain is L-lactate dehydrogenase from Clostridium botulinum (strain 657 / Type Ba4).